Consider the following 140-residue polypeptide: L-fucose mutarotase (140 aa).

His22 acts as the Proton donor in catalysis. Substrate contacts are provided by residues Asp30, Arg107, and 129–131; that span reads YGN.

This sequence belongs to the RbsD / FucU family. FucU mutarotase subfamily. In terms of assembly, homodecamer.

The protein localises to the cytoplasm. It carries out the reaction alpha-L-fucose = beta-L-fucose. It functions in the pathway carbohydrate metabolism; L-fucose metabolism. Its function is as follows. Involved in the anomeric conversion of L-fucose. The protein is L-fucose mutarotase of Klebsiella pneumoniae subsp. pneumoniae (strain ATCC 700721 / MGH 78578).